Consider the following 126-residue polypeptide: MKLFIITVVTILTISRVFDKTPATTEARKSKKMVGHEHFNEYLDPTFAGHTFGVVKEDFLEVKKLKKIGDENNLKNRFINEFAPTNPEDSLGIGHPRVLNNKFTNDFAPTNPGDSPGIRHPGVVNV.

The N-terminal stretch at 1–19 (MKLFIITVVTILTISRVFD) is a signal peptide. Positions 20-80 (KTPATTEARK…ENNLKNRFIN (61 aa)) are excised as a propeptide. Residues P84 and P87 each carry the hydroxyproline modification. A propeptide spanning residues 96 to 105 (PRVLNNKFTN) is cleaved from the precursor. 3 positions are modified to hydroxyproline: P109, P112, and P116. Residues 121-126 (PGVVNV) constitute a propeptide that is removed on maturation.

The protein belongs to the C-terminally encoded plant signaling peptide (CEP) family. In terms of assembly, interacts with CEP receptors (e.g. CEPR1 and CEPR2). In terms of processing, the mature small signaling peptide is generated by proteolytic processing of the longer precursor. In terms of tissue distribution, mostly expressed in roots. Present in cotyledons, shoot apical meristem (SAM), leaves, inflorescence stems and flowers.

The protein localises to the secreted. It is found in the extracellular space. The protein resides in the apoplast. Its function is as follows. Extracellular signaling peptide that represses primary root growth rate. Negatively regulates the number of leaves and flowering, and modulates leaf morphology. Regulates systemic nitrogen (N)-demand signaling. Mediates up-regulation of genes involved in N uptake and assimilation pathways. The protein is Precursor of CEP2 of Arabidopsis thaliana (Mouse-ear cress).